Here is a 313-residue protein sequence, read N- to C-terminus: tRNA dimethylallyltransferase (313 aa).

An ATP-binding site is contributed by 11-18; the sequence is GPTASGKT. 13-18 lines the substrate pocket; the sequence is TASGKT. 2 interaction with substrate tRNA regions span residues 36–39 and 160–164; these read DSRQ and QRLIR.

The protein belongs to the IPP transferase family. In terms of assembly, monomer. Mg(2+) serves as cofactor.

It carries out the reaction adenosine(37) in tRNA + dimethylallyl diphosphate = N(6)-dimethylallyladenosine(37) in tRNA + diphosphate. Catalyzes the transfer of a dimethylallyl group onto the adenine at position 37 in tRNAs that read codons beginning with uridine, leading to the formation of N6-(dimethylallyl)adenosine (i(6)A). This Chlorobaculum parvum (strain DSM 263 / NCIMB 8327) (Chlorobium vibrioforme subsp. thiosulfatophilum) protein is tRNA dimethylallyltransferase.